The chain runs to 184 residues: Serine recombinase PinE (184 aa).

Positions 1-134 constitute a Resolvase/invertase-type recombinase catalytic domain; sequence MLIGYVRVST…AGLETARAQG (134 aa). Catalysis depends on Ser-9, which acts as the O-(5'-phospho-DNA)-serine intermediate. The H-T-H motif DNA-binding region spans 161-180; that stretch reads RQKVAIIYDVGVSTLYKRFP.

It belongs to the site-specific recombinase resolvase family.

Its function is as follows. This protein catalyzes the inversion of an 1800-bp E.coli DNA fragment, the P region, which can exist in either orientation. The function of the inversion is not yet clear. The protein is Serine recombinase PinE (pinE) of Escherichia coli (strain K12).